The chain runs to 177 residues: MGEVLEFEEYVRTRQDALLRSARRLVPDPVDAQDLLQTALARTYGRWETIEDKRLADAYLRRVMINTRTEWWRARKLEEVPTEQLPESPMDDATEQHADRALLMDVLKVLAPKQRSVVVLRHWEQMSTEETAAALGMSAGTVKSTLHRALARLREELVARDLDARALEREERERCAA.

The Polymerase core binding motif lies at 34 to 47 (DLLQTALARTYGRW). A DNA-binding region (H-T-H motif) is located at residues 128-147 (TEETAAALGMSAGTVKSTLH).

It belongs to the sigma-70 factor family. ECF subfamily.

The protein localises to the cytoplasm. Functionally, sigma factors are initiation factors that promote the attachment of RNA polymerase to specific initiation sites and are then released. This sigma factor is required for normal cell wall integrity; it is recruited by RNA polymerase to transcribe genes with cell wall-related functions. It is also involved in the transcription of the dagA gene coding for an extracellular agar-degrading enzyme. The sequence is that of RNA polymerase sigma-E factor (sigE) from Streptomyces coelicolor (strain ATCC BAA-471 / A3(2) / M145).